Consider the following 168-residue polypeptide: MQCPACRHTDSRVLESRSSESGRSVRRRRECLSCGHRFTTYERVEFVPISVIKRNGDRESFDRSKLLRGIVRACEKTGVSAQQMDLLVDEIEGTLQQRSSRDVQSSEIGEMVLQQIGRLSEVAYIRFASVYRQFRGVRDFVETLDRLQDLSRDEVGDVPAAVTSLTSA.

The segment at 1-21 is disordered; that stretch reads MQCPACRHTDSRVLESRSSES. The segment at 3–34 is a zinc-finger region; the sequence is CPACRHTDSRVLESRSSESGRSVRRRRECLSC. The span at 7-20 shows a compositional bias: basic and acidic residues; sequence RHTDSRVLESRSSE. The 91-residue stretch at 49-139 folds into the ATP-cone domain; that stretch reads ISVIKRNGDR…VYRQFRGVRD (91 aa).

This sequence belongs to the NrdR family. Requires Zn(2+) as cofactor.

Its function is as follows. Negatively regulates transcription of bacterial ribonucleotide reductase nrd genes and operons by binding to NrdR-boxes. The chain is Transcriptional repressor NrdR from Synechococcus elongatus (strain ATCC 33912 / PCC 7942 / FACHB-805) (Anacystis nidulans R2).